Here is a 251-residue protein sequence, read N- to C-terminus: Small ribosomal subunit protein uS3 (251 aa).

Residues 39-109 (IRNYVQARLK…EVKIDVIEVI (71 aa)) form the KH type-2 domain. Residues 222-239 (LKKIKDRRGEQRSRGRDS) show a composition bias toward basic and acidic residues. The tract at residues 222–251 (LKKIKDRRGEQRSRGRDSRNRRRRKPRQTT) is disordered. Residues 240 to 251 (RNRRRRKPRQTT) are compositionally biased toward basic residues.

Belongs to the universal ribosomal protein uS3 family. Part of the 30S ribosomal subunit. Forms a tight complex with proteins S10 and S14.

In terms of biological role, binds the lower part of the 30S subunit head. Binds mRNA in the 70S ribosome, positioning it for translation. This is Small ribosomal subunit protein uS3 from Prosthecochloris aestuarii (strain DSM 271 / SK 413).